The following is a 783-amino-acid chain: Rho GTPase-activating protein gacR (783 aa).

A coiled-coil region spans residues 138–188; the sequence is AKNRFDKARLSFDEASEQFKQLRKKQNNINNEKLLEAEEDLDYATQQFSDI. The segment at 262–299 is disordered; it reads QFEQTNSSRTISLPPPPPPKPTSSTPSSSPSPSPSSSI. Positions 283–299 are enriched in low complexity; that stretch reads TSSTPSSSPSPSPSSSI. Residues 319-509 enclose the Rho-GAP domain; it reads MALSTITERE…FIISNFNNIF (191 aa). Residues 527–539 show a composition bias toward gly residues; that stretch reads GSSGGGGGGGSSG. The interval 527–745 is disordered; that stretch reads GSSGGGGGGG…TTNSRPLSNS (219 aa). 4 stretches are compositionally biased toward low complexity: residues 568-589, 599-630, 641-651, and 661-698; these read SVNTSSSQSSSSSSSSSFASSA, PSSSSSPIITTTSPNSNTNINSNTSVNTNINP, PKKISSSSNSL, and SIPEKSQNNITPTILSSSLSAPTSPTTTTTTNPLRSST. A compositionally biased stretch (polar residues) spans 706–738; sequence NRVSMYLQNSNTGVPLPSQKPQRVISNNNTTTN.

Its subcellular location is the cytoplasm. Rho GTPase-activating protein involved in the signal transduction pathway. The sequence is that of Rho GTPase-activating protein gacR (gacR) from Dictyostelium discoideum (Social amoeba).